A 324-amino-acid polypeptide reads, in one-letter code: Beta-ketoacyl-[acyl-carrier-protein] synthase III (324 aa).

Residues C114 and H246 contribute to the active site. The ACP-binding stretch occupies residues 247–251; sequence QANLR. N276 is a catalytic residue.

It belongs to the thiolase-like superfamily. FabH family. As to quaternary structure, homodimer.

Its subcellular location is the cytoplasm. The catalysed reaction is malonyl-[ACP] + acetyl-CoA + H(+) = 3-oxobutanoyl-[ACP] + CO2 + CoA. It functions in the pathway lipid metabolism; fatty acid biosynthesis. In terms of biological role, catalyzes the condensation reaction of fatty acid synthesis by the addition to an acyl acceptor of two carbons from malonyl-ACP. Catalyzes the first condensation reaction which initiates fatty acid synthesis and may therefore play a role in governing the total rate of fatty acid production. Possesses both acetoacetyl-ACP synthase and acetyl transacylase activities. Its substrate specificity determines the biosynthesis of branched-chain and/or straight-chain of fatty acids. The protein is Beta-ketoacyl-[acyl-carrier-protein] synthase III of Campylobacter jejuni (strain RM1221).